The following is a 260-amino-acid chain: Coiled-coil domain-containing protein 127 (260 aa).

Residues 47 to 135 adopt a coiled-coil conformation; sequence ESQKEIEKAR…QIIQEKSQRQ (89 aa).

This Rattus norvegicus (Rat) protein is Coiled-coil domain-containing protein 127 (Ccdc127).